A 430-amino-acid chain; its full sequence is Dye-decolorizing peroxidase Tfu_3078 (430 aa).

Positions 1 to 39 form a signal peptide, tat-type signal; the sequence is MTEPDTERKGSSRRGFLAGLGAAALTGAGIGMAAGEVLR. The interval 42 to 75 is disordered; the sequence is LPDSDPAASPEAEQRLRMAAQRADATAAPQPGIS. Residues 60 to 69 are compositionally biased toward low complexity; that stretch reads AAQRADATAA. Catalysis depends on aspartate 242, which acts as the Proton acceptor. Residue histidine 338 participates in heme binding.

The protein belongs to the DyP-type peroxidase family. Monomer. It depends on heme b as a cofactor. Exported by the Tat system. The position of the signal peptide cleavage has not been experimentally proven.

Its subcellular location is the secreted. It catalyses the reaction Reactive Blue 5 + 2 H2O2 = 2,2'-disulfonyl azobenzene + 3-[(4-amino-6-chloro-1,3,5-triazin-2-yl)amino]benzenesulfonate + phthalate + 2 H2O + 2 H(+). Its function is as follows. Peroxidase that is able to convert a large number of compounds, but its physiological substrate is not known. Shows high reactivity towards anthraquinone dyes (e.g. Reactive Blue 19) and a modest activity towards standard peroxidase substrates (such as guaiacol and 2,6-dimethoxyphenol) and azo dyes (e.g. Reactive Blue 5). Is also able to oxidize aromatic sulfides enantioselectively, resulting in the corresponding (R)-sulfoxides, but with a poor efficiency. Does not display catalase activity. The chain is Dye-decolorizing peroxidase Tfu_3078 from Thermobifida fusca (strain YX).